The sequence spans 230 residues: Thymidylate kinase (230 aa).

Residue 20 to 27 participates in ATP binding; it reads GGEGSGKS.

It belongs to the thymidylate kinase family.

It catalyses the reaction dTMP + ATP = dTDP + ADP. Its function is as follows. Phosphorylation of dTMP to form dTDP in both de novo and salvage pathways of dTTP synthesis. The protein is Thymidylate kinase of Nitrobacter hamburgensis (strain DSM 10229 / NCIMB 13809 / X14).